We begin with the raw amino-acid sequence, 163 residues long: Cyclic pyranopterin monophosphate synthase (163 aa).

Substrate is bound by residues 78-80 (LCH) and 116-117 (ME). Aspartate 131 is a catalytic residue.

This sequence belongs to the MoaC family. In terms of assembly, homohexamer; trimer of dimers.

It carries out the reaction (8S)-3',8-cyclo-7,8-dihydroguanosine 5'-triphosphate = cyclic pyranopterin phosphate + diphosphate. The protein operates within cofactor biosynthesis; molybdopterin biosynthesis. In terms of biological role, catalyzes the conversion of (8S)-3',8-cyclo-7,8-dihydroguanosine 5'-triphosphate to cyclic pyranopterin monophosphate (cPMP). This Agrobacterium fabrum (strain C58 / ATCC 33970) (Agrobacterium tumefaciens (strain C58)) protein is Cyclic pyranopterin monophosphate synthase.